Here is a 245-residue protein sequence, read N- to C-terminus: 1-(5-phosphoribosyl)-5-[(5-phosphoribosylamino)methylideneamino] imidazole-4-carboxamide isomerase (245 aa).

The Proton acceptor role is filled by Asp7. Asp129 functions as the Proton donor in the catalytic mechanism.

The protein belongs to the HisA/HisF family.

It localises to the cytoplasm. The enzyme catalyses 1-(5-phospho-beta-D-ribosyl)-5-[(5-phospho-beta-D-ribosylamino)methylideneamino]imidazole-4-carboxamide = 5-[(5-phospho-1-deoxy-D-ribulos-1-ylimino)methylamino]-1-(5-phospho-beta-D-ribosyl)imidazole-4-carboxamide. It functions in the pathway amino-acid biosynthesis; L-histidine biosynthesis; L-histidine from 5-phospho-alpha-D-ribose 1-diphosphate: step 4/9. The protein is 1-(5-phosphoribosyl)-5-[(5-phosphoribosylamino)methylideneamino] imidazole-4-carboxamide isomerase of Aliivibrio fischeri (strain MJ11) (Vibrio fischeri).